The chain runs to 321 residues: Protoheme IX farnesyltransferase (321 aa).

Transmembrane regions (helical) follow at residues 28-48 (VMSL…DPVH), 49-69 (PIVG…SGAL), 94-114 (VMPN…VFTL), 116-136 (IVAN…YVVI), 149-169 (IVIG…AATG), 176-196 (FILF…LALG), 222-242 (ILLY…LGFA), 247-267 (GMLS…VYIV), 277-297 (AKAL…EIVV), and 300-320 (LVPI…PGFF).

It belongs to the UbiA prenyltransferase family. Protoheme IX farnesyltransferase subfamily.

The protein resides in the cell inner membrane. The catalysed reaction is heme b + (2E,6E)-farnesyl diphosphate + H2O = Fe(II)-heme o + diphosphate. It functions in the pathway porphyrin-containing compound metabolism; heme O biosynthesis; heme O from protoheme: step 1/1. Converts heme B (protoheme IX) to heme O by substitution of the vinyl group on carbon 2 of heme B porphyrin ring with a hydroxyethyl farnesyl side group. This chain is Protoheme IX farnesyltransferase, found in Beijerinckia indica subsp. indica (strain ATCC 9039 / DSM 1715 / NCIMB 8712).